The primary structure comprises 739 residues: Catalase-peroxidase (739 aa).

The segment at 1 to 33 (MSVEHPPIGEANTEPAAGGCPVTGRLRHPLQGG) is disordered. Positions 106–229 (WHSAGTYRSS…LAAVQMGLIY (124 aa)) form a cross-link, tryptophyl-tyrosyl-methioninium (Trp-Tyr) (with M-255). H107 (proton acceptor) is an active-site residue. Residues 113–134 (RSSDGRGGANTGQQRFAPLNSW) form a disordered region. Residues 229–255 (YVNPEGPNGNPDPLAAAVDIKDTFGRM) constitute a cross-link (tryptophyl-tyrosyl-methioninium (Tyr-Met) (with W-106)). H270 is a heme b binding site.

It belongs to the peroxidase family. Peroxidase/catalase subfamily. Homodimer or homotetramer. Heme b is required as a cofactor. In terms of processing, formation of the three residue Trp-Tyr-Met cross-link is important for the catalase, but not the peroxidase activity of the enzyme.

The enzyme catalyses H2O2 + AH2 = A + 2 H2O. The catalysed reaction is 2 H2O2 = O2 + 2 H2O. In terms of biological role, bifunctional enzyme with both catalase and broad-spectrum peroxidase activity. The chain is Catalase-peroxidase from Nocardia farcinica (strain IFM 10152).